The primary structure comprises 430 residues: Alpha-(1-&gt;3)-arabinofuranosyltransferase (430 aa).

Transmembrane regions (helical) follow at residues A26 to I46, W114 to F134, Y136 to V156, L160 to L180, A194 to L214, F218 to L238, W276 to L296, F307 to G327, W352 to W372, and Y381 to F401.

This sequence belongs to the glycosyltransferase 87 family.

The protein localises to the cell membrane. It carries out the reaction Adds an alpha-D-arabinofuranosyl group from trans,octacis-decaprenylphospho-beta-D-arabinofuranose at the 3-O-position of an alpha-(1-&gt;5)-arabinofuranan chain attached to a beta-(1-&gt;5)-galactofuranan chain.. It functions in the pathway cell wall biogenesis; cell wall polysaccharide biosynthesis. Its function is as follows. Involved in the biosynthesis of the arabinogalactan (AG) region of the mycolylarabinogalactan-peptidoglycan (mAGP) complex, an essential component of the mycobacterial cell wall. Catalyzes the addition of an arabinofuranosyl (Araf) residue from the sugar donor beta-D-arabinofuranosyl-1-monophosphoryldecaprenol (DPA) on the C-3 of an alpha-(1-&gt;5)-linked Araf from the arabinan backbone of AG. This chain is Alpha-(1-&gt;3)-arabinofuranosyltransferase (aftC), found in Mycolicibacterium smegmatis (strain ATCC 700084 / mc(2)155) (Mycobacterium smegmatis).